The primary structure comprises 101 residues: Small ribosomal subunit protein uS14A (101 aa).

Positions I31–H73 are disordered. Positions R61 to P70 are enriched in basic and acidic residues.

It belongs to the universal ribosomal protein uS14 family. As to quaternary structure, part of the 30S ribosomal subunit. Contacts proteins S3 and S10.

In terms of biological role, binds 16S rRNA, required for the assembly of 30S particles and may also be responsible for determining the conformation of the 16S rRNA at the A site. The chain is Small ribosomal subunit protein uS14A from Mycolicibacterium vanbaalenii (strain DSM 7251 / JCM 13017 / BCRC 16820 / KCTC 9966 / NRRL B-24157 / PYR-1) (Mycobacterium vanbaalenii).